Reading from the N-terminus, the 131-residue chain is Small ribosomal subunit protein uS8 (131 aa).

It belongs to the universal ribosomal protein uS8 family. As to quaternary structure, part of the 30S ribosomal subunit. Contacts proteins S5 and S12.

One of the primary rRNA binding proteins, it binds directly to 16S rRNA central domain where it helps coordinate assembly of the platform of the 30S subunit. This chain is Small ribosomal subunit protein uS8, found in Nitrosomonas eutropha (strain DSM 101675 / C91 / Nm57).